Reading from the N-terminus, the 484-residue chain is Malonate-semialdehyde dehydrogenase 1 (484 aa).

5 residues coordinate NAD(+): phenylalanine 154, lysine 178, glutamate 181, arginine 182, and serine 231. Catalysis depends on cysteine 286, which acts as the Nucleophile. Glutamate 384 is an NAD(+) binding site.

It belongs to the aldehyde dehydrogenase family. IolA subfamily. As to quaternary structure, homotetramer.

The catalysed reaction is 3-oxopropanoate + NAD(+) + CoA + H2O = hydrogencarbonate + acetyl-CoA + NADH + H(+). The enzyme catalyses 2-methyl-3-oxopropanoate + NAD(+) + CoA + H2O = propanoyl-CoA + hydrogencarbonate + NADH + H(+). The protein operates within polyol metabolism; myo-inositol degradation into acetyl-CoA; acetyl-CoA from myo-inositol: step 7/7. In terms of biological role, catalyzes the oxidation of malonate semialdehyde (MSA) and methylmalonate semialdehyde (MMSA) into acetyl-CoA and propanoyl-CoA, respectively. Is involved in a myo-inositol catabolic pathway. Bicarbonate, and not CO2, is the end-product of the enzymatic reaction. This chain is Malonate-semialdehyde dehydrogenase 1, found in Bacillus licheniformis (strain ATCC 14580 / DSM 13 / JCM 2505 / CCUG 7422 / NBRC 12200 / NCIMB 9375 / NCTC 10341 / NRRL NRS-1264 / Gibson 46).